The chain runs to 293 residues: Acidic endochitinase SE2 (293 aa).

Residues 1–25 (MAAKIVSVLFLISLLIFASFESSHG) form the signal peptide. A GH18 domain is found at 26-293 (SQIVIYWGQN…GYSSAIKSSV (268 aa)). Disulfide bonds link C45/C91 and C75/C81. The active-site Proton donor is E151. A disulfide bridge links C183 with C212.

This sequence belongs to the glycosyl hydrolase 18 family. Chitinase class II subfamily. In terms of tissue distribution, accumulates in leaves during infection.

The protein localises to the secreted. It localises to the extracellular space. The enzyme catalyses Random endo-hydrolysis of N-acetyl-beta-D-glucosaminide (1-&gt;4)-beta-linkages in chitin and chitodextrins.. Its function is as follows. This protein functions as a defense against chitin containing fungal pathogens. This endochitinase also exhibits exochitinase activity, i.e. it is capable of hydrolyzing chito-oligosaccharides, including chitobiose. The protein is Acidic endochitinase SE2 (SE2) of Beta vulgaris (Sugar beet).